The following is a 90-amino-acid chain: Probable Fe(2+)-trafficking protein (90 aa).

The protein belongs to the Fe(2+)-trafficking protein family.

In terms of biological role, could be a mediator in iron transactions between iron acquisition and iron-requiring processes, such as synthesis and/or repair of Fe-S clusters in biosynthetic enzymes. This Haemophilus influenzae (strain PittEE) protein is Probable Fe(2+)-trafficking protein.